A 514-amino-acid polypeptide reads, in one-letter code: Na(+)/H(+) antiporter NhaB (514 aa).

12 helical membrane passes run 23–43, 63–83, 97–117, 120–140, 144–164, 202–222, 238–258, 303–323, 357–377, 391–411, 447–467, and 475–495; these read LALL…PFIA, PLLP…TSAA, LLLM…LFIF, LLLS…AAAF, FLDA…FYGI, LMMH…VGEP, FFLR…LTCM, AVIG…VGLI, LTVF…APII, LFYL…VGTI, ATPN…APLI, and VWMA…CVEF.

This sequence belongs to the NhaB Na(+)/H(+) (TC 2.A.34) antiporter family.

It is found in the cell inner membrane. It catalyses the reaction 2 Na(+)(in) + 3 H(+)(out) = 2 Na(+)(out) + 3 H(+)(in). Functionally, na(+)/H(+) antiporter that extrudes sodium in exchange for external protons. This Salmonella newport (strain SL254) protein is Na(+)/H(+) antiporter NhaB.